The sequence spans 1966 residues: Probable serine/threonine-protein kinase vps15 (1966 aa).

One can recognise a Protein kinase domain in the interval Ile21–Ile303. Residues Leu27 to Thr35 and Lys49 contribute to the ATP site. The Proton acceptor role is filled by Asp144. The interval Pro362–Asn407 is disordered. Residues Asn367–Asn407 show a composition bias toward low complexity. HEAT repeat units lie at residues Cys558–Thr596, Ile604–Arg642, Lys717–Ala754, and Ser756–Leu793. 4 disordered regions span residues Ser916–Ser937, Ser1036–Thr1062, Gly1106–Asn1130, and Thr1190–Asn1263. Composition is skewed to low complexity over residues Gly1106–Gly1119 and Leu1192–Asn1263. 4 WD repeats span residues Glu1460–Thr1499, Gln1508–Asn1547, Thr1564–Asn1605, and Ala1610–Ser1649. Residues Arg1699 to Tyr1743 are disordered. Composition is skewed to low complexity over residues Gln1703 to Gln1722 and Thr1732 to Ser1742. WD repeat units lie at residues Lys1790–Tyr1829 and His1935–Lys1966.

It belongs to the protein kinase superfamily. Ser/Thr protein kinase family.

It catalyses the reaction L-seryl-[protein] + ATP = O-phospho-L-seryl-[protein] + ADP + H(+). The enzyme catalyses L-threonyl-[protein] + ATP = O-phospho-L-threonyl-[protein] + ADP + H(+). This Dictyostelium discoideum (Social amoeba) protein is Probable serine/threonine-protein kinase vps15 (vps15).